The chain runs to 392 residues: Phosphoglycerate kinase (392 aa).

Substrate-binding positions include 21-23 (DFN), R36, 59-62 (HLGR), R113, and R146. Residues K197, E319, and 345–348 (GGDT) each bind ATP.

Belongs to the phosphoglycerate kinase family. As to quaternary structure, monomer.

Its subcellular location is the cytoplasm. It carries out the reaction (2R)-3-phosphoglycerate + ATP = (2R)-3-phospho-glyceroyl phosphate + ADP. The protein operates within carbohydrate degradation; glycolysis; pyruvate from D-glyceraldehyde 3-phosphate: step 2/5. The protein is Phosphoglycerate kinase of Francisella tularensis subsp. novicida (strain U112).